The chain runs to 299 residues: MKPDAAQVKTFLLQLQDSLCQQLSAVDGAPFIEDAWQREGGGGGRSRVLREGRVFEQAGVNFSHVHGDAMPASATAHRPELAGRSFEAMGVSLVVHPLNPYVPTSHANVRFFIAEKPGADPVWWFGGGFDLTPYYGFEEDAVHWHRTARDLCLPFGEEVYPRYKKWCDDYFYLKHRQEQRGIGGLFFDDLNTPDFDHCFAFMQAVGNGYADAYLPIVERRKATPYGERERHFQLYRRGRYVEFNLVWDRGTLFGLQTGGRTESILMSMPPLVRWEYDYQPEPGSPEAALSEFIQVRDWL.

Serine 92 lines the substrate pocket. Histidine 96 and histidine 106 together coordinate a divalent metal cation. Histidine 106 acts as the Proton donor in catalysis. Substrate is bound at residue 108 to 110 (NVR). A divalent metal cation-binding residues include histidine 145 and histidine 175. Residues 240–275 (YVEFNLVWDRGTLFGLQTGGRTESILMSMPPLVRWE) are important for dimerization. Residue 258-260 (GGR) participates in substrate binding.

It belongs to the aerobic coproporphyrinogen-III oxidase family. Homodimer. The cofactor is a divalent metal cation.

Its subcellular location is the cytoplasm. It carries out the reaction coproporphyrinogen III + O2 + 2 H(+) = protoporphyrinogen IX + 2 CO2 + 2 H2O. Its pathway is porphyrin-containing compound metabolism; protoporphyrin-IX biosynthesis; protoporphyrinogen-IX from coproporphyrinogen-III (O2 route): step 1/1. Involved in the heme biosynthesis. Catalyzes the aerobic oxidative decarboxylation of propionate groups of rings A and B of coproporphyrinogen-III to yield the vinyl groups in protoporphyrinogen-IX. The sequence is that of Oxygen-dependent coproporphyrinogen-III oxidase from Klebsiella pneumoniae subsp. pneumoniae (strain ATCC 700721 / MGH 78578).